The chain runs to 59 residues: Large ribosomal subunit protein uL30 (59 aa).

This sequence belongs to the universal ribosomal protein uL30 family. In terms of assembly, part of the 50S ribosomal subunit.

This chain is Large ribosomal subunit protein uL30, found in Clostridium botulinum (strain Alaska E43 / Type E3).